Reading from the N-terminus, the 142-residue chain is Large ribosomal subunit protein uL23 (142 aa).

Belongs to the universal ribosomal protein uL23 family. In terms of assembly, component of the large ribosomal subunit. Mature ribosomes consist of a small (40S) and a large (60S) subunit. The 40S subunit contains about 32 different proteins and 1 molecule of RNA (18S). The 60S subunit contains 45 different proteins and 3 molecules of RNA (25S, 5.8S and 5S).

It localises to the cytoplasm. Component of the ribosome, a large ribonucleoprotein complex responsible for the synthesis of proteins in the cell. The small ribosomal subunit (SSU) binds messenger RNAs (mRNAs) and translates the encoded message by selecting cognate aminoacyl-transfer RNA (tRNA) molecules. The large subunit (LSU) contains the ribosomal catalytic site termed the peptidyl transferase center (PTC), which catalyzes the formation of peptide bonds, thereby polymerizing the amino acids delivered by tRNAs into a polypeptide chain. The nascent polypeptides leave the ribosome through a tunnel in the LSU and interact with protein factors that function in enzymatic processing, targeting, and the membrane insertion of nascent chains at the exit of the ribosomal tunnel. RPL25 is a major component of the universal docking site for these factors at the polypeptide exit tunnel. The chain is Large ribosomal subunit protein uL23 from Candida albicans (strain SC5314 / ATCC MYA-2876) (Yeast).